Consider the following 156-residue polypeptide: Small ribosomal subunit protein uS7 (156 aa).

Belongs to the universal ribosomal protein uS7 family. As to quaternary structure, part of the 30S ribosomal subunit. Contacts proteins S9 and S11.

Functionally, one of the primary rRNA binding proteins, it binds directly to 16S rRNA where it nucleates assembly of the head domain of the 30S subunit. Is located at the subunit interface close to the decoding center, probably blocks exit of the E-site tRNA. This is Small ribosomal subunit protein uS7 from Lactobacillus johnsonii (strain CNCM I-12250 / La1 / NCC 533).